We begin with the raw amino-acid sequence, 443 residues long: Chromosome partition protein MukF (443 aa).

The leucine-zipper stretch occupies residues 209–237 (LDETSGNLRELQDTLNAAGDKLQAQLLRI).

The protein belongs to the MukF family. As to quaternary structure, interacts, and probably forms a ternary complex, with MukE and MukB via its C-terminal region. The complex formation is stimulated by calcium or magnesium. It is required for an interaction between MukE and MukB.

The protein resides in the cytoplasm. The protein localises to the nucleoid. In terms of biological role, involved in chromosome condensation, segregation and cell cycle progression. May participate in facilitating chromosome segregation by condensation DNA from both sides of a centrally located replisome during cell division. Not required for mini-F plasmid partitioning. Probably acts via its interaction with MukB and MukE. Overexpression results in anucleate cells. It has a calcium binding activity. This is Chromosome partition protein MukF from Actinobacillus pleuropneumoniae serotype 3 (strain JL03).